Consider the following 861-residue polypeptide: Bifunctional uridylyltransferase/uridylyl-removing enzyme (861 aa).

The tract at residues 1–321 (MKNDNRIIKN…VYHQKQKIIR (321 aa)) is uridylyltransferase. A uridylyl-removing region spans residues 322 to 678 (LDDEFQLSNR…IMPHHSQGGT (357 aa)). The region spanning 440 to 562 (VDQHTLFVIR…LPHARYLDYL (123 aa)) is the HD domain. ACT domains are found at residues 679–760 (EVFI…AVSR) and 788–861 (QLFL…KSKY).

It belongs to the GlnD family. Requires Mg(2+) as cofactor.

It carries out the reaction [protein-PII]-L-tyrosine + UTP = [protein-PII]-uridylyl-L-tyrosine + diphosphate. The catalysed reaction is [protein-PII]-uridylyl-L-tyrosine + H2O = [protein-PII]-L-tyrosine + UMP + H(+). Uridylyltransferase (UTase) activity is inhibited by glutamine, while glutamine activates uridylyl-removing (UR) activity. Functionally, modifies, by uridylylation and deuridylylation, the PII regulatory proteins (GlnB and homologs), in response to the nitrogen status of the cell that GlnD senses through the glutamine level. Under low glutamine levels, catalyzes the conversion of the PII proteins and UTP to PII-UMP and PPi, while under higher glutamine levels, GlnD hydrolyzes PII-UMP to PII and UMP (deuridylylation). Thus, controls uridylylation state and activity of the PII proteins, and plays an important role in the regulation of nitrogen assimilation and metabolism. This Legionella pneumophila (strain Paris) protein is Bifunctional uridylyltransferase/uridylyl-removing enzyme.